The primary structure comprises 179 residues: MKFSIIALALAVAFVCVAESRSEEEGYDVSEEIQAEELEEAARGGINRKLMEMVNKLRKVQGREDSEDAGRAGINRKLMEMVNKLRKVQGREDTEEAGRGGINRKLMEMVNKLRKVQGREDSEEAGRGGINRKLMEMVNKLRKVQGREDTEEARSLKDKVKSMGEKLKQYIQTWKAKFG.

An N-terminal signal peptide occupies residues methionine 1–serine 22. Residues glutamate 23 to arginine 43 constitute a propeptide that is removed on maturation. A Processing quadruplet motif 1 motif is present at residues glutamate 40–arginine 43. The residue at position 61 (glutamine 61) is a Glutamine amide. Residues arginine 63–serine 66 carry the Inverted processing quadruplet motif 1 motif. The propeptide occupies arginine 63–arginine 71. Residues aspartate 68–arginine 71 carry the Processing quadruplet motif 2 motif. Position 89 is a glutamine amide (glutamine 89). Positions arginine 91–threonine 94 match the Inverted processing quadruplet motif 2 motif. Residues arginine 91 to arginine 99 constitute a propeptide that is removed on maturation. The Processing quadruplet motif 3 signature appears at glutamate 96–arginine 99. Glutamine amide is present on glutamine 117. Residues arginine 119 to serine 122 carry the Inverted processing quadruplet motif 3 motif. Residues arginine 119–arginine 127 constitute a propeptide that is removed on maturation. The short motif at glutamate 124–arginine 127 is the Processing quadruplet motif 4 element. Residue glutamine 145 is modified to Glutamine amide. An Inverted processing quadruplet motif 4 motif is present at residues arginine 147–threonine 150. The propeptide occupies arginine 147–arginine 154. Residues glutamate 151–arginine 154 carry the Processing quadruplet motif 5 motif. A Phenylalanine amide modification is found at phenylalanine 178.

Belongs to the cationic peptide 03 (latarcin) family. 04 subfamily. Cleavage of the propeptide depends on the processing quadruplet motif (PQM) (XXXR, with at least one of X being E) and the inverted PQM (RXXX, with at least one of X being E). In terms of tissue distribution, expressed by the venom gland.

It localises to the secreted. Functionally, M-zodatoxin-Lt4b: Has antimicrobial activity against Gram-positive bacteria (A.globiformis VKM Ac-1112 (MIC=0.3 uM), and B.subtilis VKM B-501 (MIC=1.1 uM)), Gram-negative bacteria (E.coli DH5-alpha (MIC=4.4 uM), E.coli MH1 (MIC=4.4 uM), and P.aeruginosa PAO1 (MIC=&gt;35 uM)), and yeasts (P.pastoris GS115 (MIC=&gt;35 uM), and S.cerevisiae Y190 (MIC=35 uM)). Does not have hemolytic activity against rabbit erythrocytes. Causes paralysis, but is not lethal when injected into insect (M.domestica) larvae. In terms of biological role, shows no antimicrobial activity against Gram-positive bacterium B.subtilis B-501 or Gram-negative bacterium E.coli DH5-alpha at concentration up to 20 uM. The polypeptide is M-zodatoxin-Lt4b (Lachesana tarabaevi (Spider)).